Reading from the N-terminus, the 184-residue chain is ATP synthase subunit b, chloroplastic (184 aa).

Residues 27–49 (LATNPINLSVVFGVLIFFGKGVL) form a helical membrane-spanning segment.

This sequence belongs to the ATPase B chain family. As to quaternary structure, F-type ATPases have 2 components, F(1) - the catalytic core - and F(0) - the membrane proton channel. F(1) has five subunits: alpha(3), beta(3), gamma(1), delta(1), epsilon(1). F(0) has four main subunits: a(1), b(1), b'(1) and c(10-14). The alpha and beta chains form an alternating ring which encloses part of the gamma chain. F(1) is attached to F(0) by a central stalk formed by the gamma and epsilon chains, while a peripheral stalk is formed by the delta, b and b' chains.

Its subcellular location is the plastid. It is found in the chloroplast thylakoid membrane. In terms of biological role, f(1)F(0) ATP synthase produces ATP from ADP in the presence of a proton or sodium gradient. F-type ATPases consist of two structural domains, F(1) containing the extramembraneous catalytic core and F(0) containing the membrane proton channel, linked together by a central stalk and a peripheral stalk. During catalysis, ATP synthesis in the catalytic domain of F(1) is coupled via a rotary mechanism of the central stalk subunits to proton translocation. Component of the F(0) channel, it forms part of the peripheral stalk, linking F(1) to F(0). This chain is ATP synthase subunit b, chloroplastic, found in Crucihimalaya wallichii (Rock-cress).